Consider the following 476-residue polypeptide: MKRVLLLLLAVVCGHALERGRDYEKDKVCKELSTLGKDDFRTLSLVLYSRKFPSGTFDQVMKLVKEVVSLTEDCCTEDADPGCYDNRTSALSATSCESDSPFPVHPGTAECCTKEGLGRKLCMAALKHPPQEFPTYVEPANDEICEAFRQDPMEFADKFLYEYSSNYGQAPLPILVSYTKSYLSMVGTCCTSASPTVCFLKERLQIKHLSLLTTLSNRVCSQYAAYGKEKSRRSHLIKLAQKAPTAALKEVLPLAEDITNILSKCCESTSEDCMAKELPEHTVKICDTLSTKNPKFEECCQEKTPMDIFVCTYFMPAAQPPEPANVELPTSKDVCDSKNINVMDQYTFELSRKTHIPEVFLSKVLEPTLKSLSECCHSADSTACLNAKGPVLKKEVSSFIDKGQELCAGYSENTFTEYKKKLSQQLRAKLPEATSAELAELVEKHSDFASKCCSINSPPNYCDSEIDAEIKNLPEP.

A signal peptide spans 1–16 (MKRVLLLLLAVVCGHA). Albumin domains follow at residues 17-208 (LERG…QIKH), 209-394 (LSLL…VLKK), and 395-476 (EVSS…LPEP). Disulfide bonds link Cys-29–Cys-75 and Cys-74–Cys-83. Asn-86 carries an N-linked (GlcNAc...) asparagine glycan. 12 cysteine pairs are disulfide-bonded: Cys-96–Cys-112, Cys-111–Cys-122, Cys-145–Cys-190, Cys-189–Cys-198, Cys-220–Cys-266, Cys-265–Cys-273, Cys-286–Cys-300, Cys-299–Cys-311, Cys-335–Cys-376, Cys-375–Cys-384, Cys-407–Cys-453, and Cys-452–Cys-462.

Belongs to the ALB/AFP/VDB family. As to quaternary structure, associates with membrane-bound immunoglobulin on the surface of B-lymphocytes and with IgG Fc receptor on the membranes of T-lymphocytes. Interacts with LRP2; the interaction is required for renal uptake of GC in complex with 25-hydroxyvitamin D3.

The protein resides in the secreted. Functionally, involved in vitamin D transport and storage, scavenging of extracellular G-actin, enhancement of the chemotactic activity of C5 alpha for neutrophils in inflammation and macrophage activation. In Oryctolagus cuniculus (Rabbit), this protein is Vitamin D-binding protein (GC).